The primary structure comprises 91 residues: Small ribosomal subunit protein bS6 (91 aa).

It belongs to the bacterial ribosomal protein bS6 family.

Functionally, binds together with bS18 to 16S ribosomal RNA. This is Small ribosomal subunit protein bS6 from Leptospira borgpetersenii serovar Hardjo-bovis (strain JB197).